Here is a 358-residue protein sequence, read N- to C-terminus: Ribosomal RNA large subunit methyltransferase M (358 aa).

Residues Ser-183, 216 to 219, Asp-235, Asp-255, and Asp-271 each bind S-adenosyl-L-methionine; that span reads APGG. Residue Lys-300 is the Proton acceptor of the active site.

It belongs to the class I-like SAM-binding methyltransferase superfamily. RNA methyltransferase RlmE family. RlmM subfamily. In terms of assembly, monomer.

The protein localises to the cytoplasm. It carries out the reaction cytidine(2498) in 23S rRNA + S-adenosyl-L-methionine = 2'-O-methylcytidine(2498) in 23S rRNA + S-adenosyl-L-homocysteine + H(+). Its function is as follows. Catalyzes the 2'-O-methylation at nucleotide C2498 in 23S rRNA. This chain is Ribosomal RNA large subunit methyltransferase M, found in Pseudomonas fluorescens (strain SBW25).